Here is a 243-residue protein sequence, read N- to C-terminus: uncharacterized protein (243 aa).

Over residues 1-18 the composition is skewed to low complexity; the sequence is MSNSHYNNYQQQQPHSSN. A disordered region spans residues 1-30; sequence MSNSHYNNYQQQQPHSSNGDPEYQHQQMVH. Residues 38-232 form the AMMECR1 domain; that stretch reads GHGMKTVAVP…MHYKEYREYQ (195 aa).

This is an uncharacterized protein from Drosophila melanogaster (Fruit fly).